A 517-amino-acid chain; its full sequence is Bifunctional purine biosynthesis protein PurH (517 aa).

Residues 1-151 (MTQERKIKRA…KNFAHVAVLC (151 aa)) form the MGS-like domain.

This sequence belongs to the PurH family.

The catalysed reaction is (6R)-10-formyltetrahydrofolate + 5-amino-1-(5-phospho-beta-D-ribosyl)imidazole-4-carboxamide = 5-formamido-1-(5-phospho-D-ribosyl)imidazole-4-carboxamide + (6S)-5,6,7,8-tetrahydrofolate. It carries out the reaction IMP + H2O = 5-formamido-1-(5-phospho-D-ribosyl)imidazole-4-carboxamide. The protein operates within purine metabolism; IMP biosynthesis via de novo pathway; 5-formamido-1-(5-phospho-D-ribosyl)imidazole-4-carboxamide from 5-amino-1-(5-phospho-D-ribosyl)imidazole-4-carboxamide (10-formyl THF route): step 1/1. It functions in the pathway purine metabolism; IMP biosynthesis via de novo pathway; IMP from 5-formamido-1-(5-phospho-D-ribosyl)imidazole-4-carboxamide: step 1/1. The protein is Bifunctional purine biosynthesis protein PurH of Elusimicrobium minutum (strain Pei191).